We begin with the raw amino-acid sequence, 37 residues long: MKVRASVKKICRNCKIIKRNGVVRVICTDAKHKQRQG.

Belongs to the bacterial ribosomal protein bL36 family.

The sequence is that of Large ribosomal subunit protein bL36 from Idiomarina loihiensis (strain ATCC BAA-735 / DSM 15497 / L2-TR).